A 222-amino-acid chain; its full sequence is MKFFPLLLLIGVVGYIMNVLFTTWLPTNYMFDPKTLNEICNSVISKHNAAEGLSTEDLLQDVRDALASHYGDEYINRYVKEEWVFNNAGGAMGQMIILHASVSEYLILFGTAVGTEGHTGVHFADDYFTILHGTQIAALPYATEAEVYTPGMTHHLKKGYAKQYSMPGGSFALELAQGWIPCMLPFGFLDTFSSTLDLYTLYRTVYLTARDMGKNLLQNKKF.

Residues 3-23 (FFPLLLLIGVVGYIMNVLFTT) form a helical membrane-spanning segment.

The protein belongs to the ERG2 family.

It localises to the endoplasmic reticulum membrane. The enzyme catalyses fecosterol = episterol. Its pathway is steroid metabolism; ergosterol biosynthesis; ergosterol from zymosterol: step 2/5. Its activity is regulated as follows. Catalytic activity is inhibited by the morphilines tridemorph, fenpropimorph, and fenpropidin. C-8 sterol isomerase; part of the third module of ergosterol biosynthesis pathway that includes the late steps of the pathway. ERG2 catalyzes the reaction which results in unsaturation at C-7 in the B ring of sterols and thus converts fecosterol to episterol. The third module or late pathway involves the ergosterol synthesis itself through consecutive reactions that mainly occur in the endoplasmic reticulum (ER) membrane. Firstly, the squalene synthase ERG9 catalyzes the condensation of 2 farnesyl pyrophosphate moieties to form squalene, which is the precursor of all steroids. Squalene synthase is crucial for balancing the incorporation of farnesyl diphosphate (FPP) into sterol and nonsterol isoprene synthesis. Secondly, the squalene epoxidase ERG1 catalyzes the stereospecific oxidation of squalene to (S)-2,3-epoxysqualene, which is considered to be a rate-limiting enzyme in steroid biosynthesis. Then, the lanosterol synthase ERG7 catalyzes the cyclization of (S)-2,3 oxidosqualene to lanosterol, a reaction that forms the sterol core. In the next steps, lanosterol is transformed to zymosterol through a complex process involving various demethylation, reduction and desaturation reactions. The lanosterol 14-alpha-demethylase ERG11 (also known as CYP51) catalyzes C14-demethylation of lanosterol to produce 4,4'-dimethyl cholesta-8,14,24-triene-3-beta-ol, which is critical for ergosterol biosynthesis. The C-14 reductase ERG24 reduces the C14=C15 double bond of 4,4-dimethyl-cholesta-8,14,24-trienol to produce 4,4-dimethyl-cholesta-8,24-dienol. 4,4-dimethyl-cholesta-8,24-dienol is substrate of the C-4 demethylation complex ERG25-ERG26-ERG27 in which ERG25 catalyzes the three-step monooxygenation required for the demethylation of 4,4-dimethyl and 4alpha-methylsterols, ERG26 catalyzes the oxidative decarboxylation that results in a reduction of the 3-beta-hydroxy group at the C-3 carbon to an oxo group, and ERG27 is responsible for the reduction of the keto group on the C-3. ERG28 has a role as a scaffold to help anchor ERG25, ERG26 and ERG27 to the endoplasmic reticulum and ERG29 regulates the activity of the iron-containing C4-methylsterol oxidase ERG25. Then, the sterol 24-C-methyltransferase ERG6 catalyzes the methyl transfer from S-adenosyl-methionine to the C-24 of zymosterol to form fecosterol. The C-8 sterol isomerase ERG2 catalyzes the reaction which results in unsaturation at C-7 in the B ring of sterols and thus converts fecosterol to episterol. The sterol-C5-desaturase ERG3 then catalyzes the introduction of a C-5 double bond in the B ring to produce 5-dehydroepisterol. The C-22 sterol desaturase ERG5 further converts 5-dehydroepisterol into ergosta-5,7,22,24(28)-tetraen-3beta-ol by forming the C-22(23) double bond in the sterol side chain. Finally, ergosta-5,7,22,24(28)-tetraen-3beta-ol is substrate of the C-24(28) sterol reductase ERG4 to produce ergosterol. The protein is C-8 sterol isomerase ERG2 of Saccharomyces cerevisiae (strain ATCC 204508 / S288c) (Baker's yeast).